The chain runs to 227 residues: Triosephosphate isomerase (227 aa).

9-11 (NFK) is a binding site for substrate. The active-site Electrophile is His93. Glu141 serves as the catalytic Proton acceptor. Substrate-binding positions include Ile146, Gly180, and 201–202 (AS).

It belongs to the triosephosphate isomerase family. Homotetramer; dimer of dimers.

Its subcellular location is the cytoplasm. The enzyme catalyses D-glyceraldehyde 3-phosphate = dihydroxyacetone phosphate. It functions in the pathway carbohydrate biosynthesis; gluconeogenesis. The protein operates within carbohydrate degradation; glycolysis; D-glyceraldehyde 3-phosphate from glycerone phosphate: step 1/1. Its function is as follows. Involved in the gluconeogenesis. Catalyzes stereospecifically the conversion of dihydroxyacetone phosphate (DHAP) to D-glyceraldehyde-3-phosphate (G3P). The chain is Triosephosphate isomerase from Saccharolobus solfataricus (strain ATCC 35092 / DSM 1617 / JCM 11322 / P2) (Sulfolobus solfataricus).